Here is a 166-residue protein sequence, read N- to C-terminus: Probable chemoreceptor glutamine deamidase CheD (166 aa).

Belongs to the CheD family.

It catalyses the reaction L-glutaminyl-[protein] + H2O = L-glutamyl-[protein] + NH4(+). Its function is as follows. Probably deamidates glutamine residues to glutamate on methyl-accepting chemotaxis receptors (MCPs), playing an important role in chemotaxis. This Clostridium acetobutylicum (strain ATCC 824 / DSM 792 / JCM 1419 / IAM 19013 / LMG 5710 / NBRC 13948 / NRRL B-527 / VKM B-1787 / 2291 / W) protein is Probable chemoreceptor glutamine deamidase CheD.